A 51-amino-acid polypeptide reads, in one-letter code: Large ribosomal subunit protein bL33 (51 aa).

This sequence belongs to the bacterial ribosomal protein bL33 family.

The polypeptide is Large ribosomal subunit protein bL33 (Nitrosococcus oceani (strain ATCC 19707 / BCRC 17464 / JCM 30415 / NCIMB 11848 / C-107)).